Here is a 582-residue protein sequence, read N- to C-terminus: Histone deacetylase 9-B (582 aa).

An interaction with mef2 region spans residues 146–195 (SNEVKQKLQEFLLSKSTKDITLNGIPQKITQSSKLWYTASHHTSLEQSSP). Residues 189-205 (SLEQSSPPLGGASSSCK) are compositionally biased toward polar residues. Disordered regions lie at residues 189 to 254 (SLEQ…KEGN), 270 to 314 (TASS…QSRL), 409 to 447 (LSSG…RTQS), and 496 to 567 (VHLQ…NQSS). Basic and acidic residues-rich tracts occupy residues 213 to 224 (DYRDDFPLRKTV) and 238 to 253 (KVAE…RKEG). Low complexity predominate over residues 270–289 (TASSSAPGSGPSSPNGACSA). A compositionally biased stretch (polar residues) spans 295-314 (GPSSLPVTTRTERWPSQSRL).

The protein belongs to the histone deacetylase family. HD type 2 subfamily. In terms of assembly, homodimer. Interacts with mef2.

It localises to the nucleus. The catalysed reaction is N(6)-acetyl-L-lysyl-[histone] + H2O = L-lysyl-[histone] + acetate. Its function is as follows. Devoided of intrinsic deacetylase activity, promotes the deacetylation of lysine residues on the N-terminal part of the core histones (H2A, H2B, H3 and H4) by recruiting other histone deacetylases. Histone deacetylation gives a tag for epigenetic repression and plays an important role in transcriptional regulation, cell cycle progression and developmental events. Represses MEF2-dependent transcription. This is Histone deacetylase 9-B (hdac9b) from Danio rerio (Zebrafish).